A 350-amino-acid chain; its full sequence is GTPase Obg (350 aa).

The 158-residue stretch at 1-158 folds into the Obg domain; that stretch reads MFIDSVKITL…RLVRLELKLI (158 aa). Positions 159 to 339 constitute an OBG-type G domain; it reads ADVGLVGFPN…LKFMLLEEIK (181 aa). Residues 165–172, 190–194, 212–215, 280–283, and 320–322 contribute to the GTP site; these read GFPNVGKS, FTTLT, DIPG, SKSD, and SSL. Mg(2+)-binding residues include S172 and T192.

This sequence belongs to the TRAFAC class OBG-HflX-like GTPase superfamily. OBG GTPase family. As to quaternary structure, monomer. The cofactor is Mg(2+).

The protein localises to the cytoplasm. Its function is as follows. An essential GTPase which binds GTP, GDP and possibly (p)ppGpp with moderate affinity, with high nucleotide exchange rates and a fairly low GTP hydrolysis rate. Plays a role in control of the cell cycle, stress response, ribosome biogenesis and in those bacteria that undergo differentiation, in morphogenesis control. The sequence is that of GTPase Obg from Campylobacter jejuni (strain RM1221).